Here is a 500-residue protein sequence, read N- to C-terminus: Nuclear distribution protein PAC1 (500 aa).

7 WD repeats span residues 125–164, 169–219, 225–265, 268–310, 338–378, 397–436, and 459–500; these read HNGHPVTAIDIHPFQPIMATASQDGTIVIWNLLNLTEPQQ, AHTR…NLKA, GHEN…IVLS, GHSN…LMIG, QNEL…IRSD, EHKSWVKDIAIHPNSRFIISVGDDRKINIWDLGLLLESNL, and IKDQ…EYIL.

Belongs to the WD repeat LIS1/nudF family. In terms of assembly, self-associates. Interacts with NDL1 and dynein.

It is found in the cytoplasm. It localises to the cytoskeleton. The protein localises to the spindle pole. Functionally, positively regulates the activity of the minus-end directed microtubule motor protein dynein. Plays a central role in positioning the mitotic spindle at the bud neck during cell division. Targets cytoplasmic dynein to microtubule plus ends, thereby promoting dynein-mediated microtubule sliding along the bud cortex and consequently the movement of the mitotic spindle to the bud neck. In Komagataella phaffii (strain GS115 / ATCC 20864) (Yeast), this protein is Nuclear distribution protein PAC1.